Consider the following 121-residue polypeptide: Large ribosomal subunit protein uL14c (121 aa).

Belongs to the universal ribosomal protein uL14 family. In terms of assembly, part of the 50S ribosomal subunit.

The protein localises to the plastid. It localises to the chloroplast. In terms of biological role, binds to 23S rRNA. The protein is Large ribosomal subunit protein uL14c of Tetradesmus obliquus (Green alga).